A 48-amino-acid polypeptide reads, in one-letter code: Large ribosomal subunit protein bL33A (48 aa).

This sequence belongs to the bacterial ribosomal protein bL33 family.

This is Large ribosomal subunit protein bL33A from Bacillus anthracis.